Here is a 419-residue protein sequence, read N- to C-terminus: MNKHQKPVLTGQRFKTRKRDEKEKFEPTVFRDTLVQGLNEAGDDLEAVAKFLDSTGSRLDYRRYADTLFDILVAGSMLAPGGTRIDDGDKTKMTNHCVFSANEDHETIRNYAQVFNKLIRRYKYLEKAFEDEMKKLLLFLKAFSETEQTKLAMLSGILLGNGTLPATILTSLFTDSLVKEGIAASFAVKLFKAWMAEKDANSVTSSLRKANLDKRLLELFPVNRQSVDHFAKYFTDAGLKELSDFLRVQQSLGTRKELQKELQERLSQECPIKEVVLYVKEEMKRNDLPETAVIGLLWTCIMNAVEWNKKEELVAEQALKHLKQYAPLLAVFSSQGQSELILLQKVQEYCYDNIHFMKAFQKIVVLFYKADVLSEEAILKWYKEAHVAKGKSVFLDQMKKFVEWLQNAEEESESEGEEN.

A disordered region spans residues 1-22 (MNKHQKPVLTGQRFKTRKRDEK). Position 117 is an N6-acetyllysine (lysine 117). Residues 248–415 (VQQSLGTRKE…QNAEEESESE (168 aa)) enclose the W2 domain. Residues serine 412 and serine 414 each carry the phosphoserine modification.

Belongs to the BZW family. Interacts with EIF3E. Interacts with EIF2S2. Interacts with EIF3C.

It is found in the cytoplasm. In terms of biological role, translation initiation regulator which represses non-AUG initiated translation and repeat-associated non-AUG (RAN) initiated translation by acting as a competitive inhibitor of eukaryotic translation initiation factor 5 (EIF5) function. Increases the accuracy of translation initiation by impeding EIF5-dependent translation from non-AUG codons by competing with it for interaction with EIF2S2 within the 43S pre-initiation complex (PIC) in an EIF3C-binding dependent manner. This chain is eIF5-mimic protein 1 (BZW2), found in Homo sapiens (Human).